The chain runs to 181 residues: Cytidylate kinase (181 aa).

G12–T20 is a binding site for ATP.

It belongs to the cytidylate kinase family. Type 2 subfamily.

It localises to the cytoplasm. It carries out the reaction CMP + ATP = CDP + ADP. The enzyme catalyses dCMP + ATP = dCDP + ADP. The sequence is that of Cytidylate kinase (cmk) from Pyrococcus abyssi (strain GE5 / Orsay).